Here is a 493-residue protein sequence, read N- to C-terminus: Ribulose bisphosphate carboxylase large chain (493 aa).

The substrate site is built by asparagine 132 and threonine 182. Lysine 184 (proton acceptor) is an active-site residue. Lysine 186 contacts substrate. Residues lysine 210, aspartate 212, and glutamate 213 each coordinate Mg(2+). An N6-carboxylysine modification is found at lysine 210. The Proton acceptor role is filled by histidine 302. Residues arginine 303, histidine 335, and serine 387 each coordinate substrate.

It belongs to the RuBisCO large chain family. Type I subfamily. In terms of assembly, heterohexadecamer of 8 large chains and 8 small chains. Mg(2+) serves as cofactor.

It catalyses the reaction 2 (2R)-3-phosphoglycerate + 2 H(+) = D-ribulose 1,5-bisphosphate + CO2 + H2O. It carries out the reaction D-ribulose 1,5-bisphosphate + O2 = 2-phosphoglycolate + (2R)-3-phosphoglycerate + 2 H(+). In terms of biological role, ruBisCO catalyzes two reactions: the carboxylation of D-ribulose 1,5-bisphosphate, the primary event in carbon dioxide fixation, as well as the oxidative fragmentation of the pentose substrate. Both reactions occur simultaneously and in competition at the same active site. This is Ribulose bisphosphate carboxylase large chain from Acidiphilium cryptum (strain JF-5).